Reading from the N-terminus, the 1304-residue chain is Zinc finger CCCH domain-containing protein 4 (1304 aa).

The segment covering 1–33 (MEAVPGTPPPPPSESPPPPSPPPPSTPSPPPCS) has biased composition (pro residues). The disordered stretch occupies residues 1-387 (MEAVPGTPPP…SDHDKPHQQS (387 aa)). The segment covering 53 to 73 (DREDGELEEGELEDDGAEEVQ) has biased composition (acidic residues). A compositionally biased stretch (basic and acidic residues) spans 80 to 99 (ERSRKEKGEKHHSDSEEEKS). Ser-92 and Ser-94 each carry phosphoserine. Residues 94–128 (SEEEKSHRRLKRKRKKEREKEKRRSKKRRKSKHKR) adopt a coiled-coil conformation. The span at 100-130 (HRRLKRKRKKEREKEKRRSKKRRKSKHKRHA) shows a compositional bias: basic residues. The span at 135 to 144 (DFSDFSDDSD) shows a compositional bias: acidic residues. The residue at position 155 (Tyr-155) is a Phosphotyrosine. Residues 165 to 174 (SHQQYSSSHN) show a composition bias toward polar residues. Over residues 194 to 218 (EDYENEQYGEYEGDEEEDMGKEDYD) the composition is skewed to acidic residues. A compositionally biased stretch (basic and acidic residues) spans 219–235 (DFTKELNQYRRAKEGSS). Basic residues predominate over residues 238 to 251 (RGSRGRGRGYRGRG). Residues 252-264 (SRGGSRGRGMGRG) are compositionally biased toward gly residues. A compositionally biased stretch (acidic residues) spans 277 to 303 (PEDEEDLYEEEIEYGESEEPMGDDDYD). Positions 304-320 (DYSKELNQYRRSKDSRG) are enriched in basic and acidic residues. Basic residues predominate over residues 322-346 (GLSRGRGRGSRGGRGKGMGRGRGRG). The segment covering 357-368 (NDDEDFYDDDMG) has biased composition (acidic residues). Residues 376–387 (RRSDHDKPHQQS) are compositionally biased toward basic and acidic residues. 3 C3H1-type zinc fingers span residues 389-416 (KKGKVICKYFVEGRCTWGDHCNFSHDIE), 418-445 (PKKRELCKFYITGFCARAENCPYMHGDF), and 446-469 (PCKLYHTTGNCINGDDCMFSHDPL). A compositionally biased stretch (acidic residues) spans 485 to 495 (AEAGAEDEKEV). The tract at residues 485 to 567 (AEAGAEDEKE…LPTHEPLSPQ (83 aa)) is disordered. 2 stretches are compositionally biased toward pro residues: residues 506 to 529 (LPKPPPGVGLLPTPPRPPGPPAPT) and 538 to 556 (GGPPPPPPPPPPPPGPPQM). Arg-599 carries the post-translational modification Asymmetric dimethylarginine. 3 disordered regions span residues 601 to 691 (PGPG…DSPH), 719 to 970 (PGLV…SHIK), and 994 to 1304 (LPIP…PFCQ). Over residues 603 to 622 (PGGPSGPMGPGPNMGPPGPM) the composition is skewed to pro residues. The span at 628–660 (PDMHPDMHPDMHPDMHPDMHPDMHPDMHPDMHP) shows a compositional bias: basic and acidic residues. A compositionally biased stretch (pro residues) spans 669 to 683 (NPGPPMGPGGPPMMP). Residues 778–809 (ALYLRIQQKQQEEERARRLAESSKQDRENEEG) adopt a coiled-coil conformation. The segment covering 787–804 (QQEEERARRLAESSKQDR) has biased composition (basic and acidic residues). 2 positions are modified to phosphoserine: Ser-816 and Ser-817. Polar residues predominate over residues 824–852 (SSVTSILKTLRQQTSSRPQASVGEPSSSG). Residues 869–884 (SDPRLSRDPRLSRHAE) are compositionally biased toward basic and acidic residues. Phosphoserine is present on residues Ser-913, Ser-916, and Ser-917. Residues 913-929 (SLHSSPAGPSSSKGQPP) are compositionally biased toward low complexity. Over residues 994–1005 (LPIPKQDVPPVP) the composition is skewed to pro residues. 2 stretches are compositionally biased toward polar residues: residues 1028 to 1044 (NTRQRPGSTDPSTSGSN) and 1058 to 1067 (VNVNTPGQSE). Over residues 1068 to 1085 (KPSDPRVRKTPTDPRLQK) the composition is skewed to basic and acidic residues. Composition is skewed to low complexity over residues 1098-1129 (PCPTEASPPAASPSGDSSPPATAPYDPRVLAA) and 1137-1146 (SSGQSSVLSG). A phosphoserine mark is found at Ser-1104, Ser-1109, Ser-1111, and Ser-1115. Thr-1119 carries the phosphothreonine modification. Residues 1204 to 1220 (KASTDGATATDRYNSYN) are compositionally biased toward polar residues. The span at 1225-1235 (KATAAPTAASS) shows a compositional bias: low complexity. A phosphoserine mark is found at Ser-1270 and Ser-1276.

Belongs to the suppressor of sable family. Interacts with WDR82.

Its subcellular location is the chromosome. In terms of biological role, RNA-binding protein that suppresses transcription of long non-coding RNAs (lncRNAs). LncRNAs are defined as transcripts more than 200 nucleotides that are not translated into protein. Together with WDR82, part of a transcription termination checkpoint that promotes transcription termination of lncRNAs and their subsequent degradation by the exosome. The transcription termination checkpoint is activated by the inefficiently spliced first exon of lncRNAs. This is Zinc finger CCCH domain-containing protein 4 from Mus musculus (Mouse).